The chain runs to 392 residues: Formate-dependent phosphoribosylglycinamide formyltransferase (392 aa).

N(1)-(5-phospho-beta-D-ribosyl)glycinamide contacts are provided by residues 20 to 21 (EL) and glutamate 80. Residues arginine 112, lysine 153, 158-163 (SSGKGQ), 193-196 (EGFV), and glutamate 201 contribute to the ATP site. The ATP-grasp domain maps to 117–306 (RLAAETLGLP…EFALHVRAIL (190 aa)). Glutamate 265 and glutamate 277 together coordinate Mg(2+). N(1)-(5-phospho-beta-D-ribosyl)glycinamide contacts are provided by residues aspartate 284, lysine 355, and 362–363 (RR).

It belongs to the PurK/PurT family. In terms of assembly, homodimer.

The catalysed reaction is N(1)-(5-phospho-beta-D-ribosyl)glycinamide + formate + ATP = N(2)-formyl-N(1)-(5-phospho-beta-D-ribosyl)glycinamide + ADP + phosphate + H(+). It participates in purine metabolism; IMP biosynthesis via de novo pathway; N(2)-formyl-N(1)-(5-phospho-D-ribosyl)glycinamide from N(1)-(5-phospho-D-ribosyl)glycinamide (formate route): step 1/1. In terms of biological role, involved in the de novo purine biosynthesis. Catalyzes the transfer of formate to 5-phospho-ribosyl-glycinamide (GAR), producing 5-phospho-ribosyl-N-formylglycinamide (FGAR). Formate is provided by PurU via hydrolysis of 10-formyl-tetrahydrofolate. In Aeromonas hydrophila subsp. hydrophila (strain ATCC 7966 / DSM 30187 / BCRC 13018 / CCUG 14551 / JCM 1027 / KCTC 2358 / NCIMB 9240 / NCTC 8049), this protein is Formate-dependent phosphoribosylglycinamide formyltransferase.